Here is a 303-residue protein sequence, read N- to C-terminus: N-acetyl-D-glucosamine kinase (303 aa).

ATP is bound by residues 4–11 (GFDIGGTK) and 133–140 (GVGGGLVL). Residues H157, C177, C179, and C184 each coordinate Zn(2+).

This sequence belongs to the ROK (NagC/XylR) family. NagK subfamily.

It carries out the reaction N-acetyl-D-glucosamine + ATP = N-acetyl-D-glucosamine 6-phosphate + ADP + H(+). Its pathway is cell wall biogenesis; peptidoglycan recycling. In terms of biological role, catalyzes the phosphorylation of N-acetyl-D-glucosamine (GlcNAc) derived from cell-wall degradation, yielding GlcNAc-6-P. This is N-acetyl-D-glucosamine kinase from Salmonella gallinarum (strain 287/91 / NCTC 13346).